The sequence spans 129 residues: MDKLHLEIVTPQGQVFSDDVSSVVLPGSEGEFGVLPNHASLISLLKAGIIDIEDKNKNHDIVAINWGYAKIDEGKVVILADGAVYVAGNSESELANSLDQAKRLIESMSSDTNAFAATIAKMENVVRAR.

It belongs to the ATPase epsilon chain family. As to quaternary structure, F-type ATPases have 2 components, CF(1) - the catalytic core - and CF(0) - the membrane proton channel. CF(1) has five subunits: alpha(3), beta(3), gamma(1), delta(1), epsilon(1). CF(0) has three main subunits: a, b and c.

The protein resides in the cell inner membrane. Produces ATP from ADP in the presence of a proton gradient across the membrane. This is ATP synthase epsilon chain from Campylobacter curvus (strain 525.92).